The following is a 4391-amino-acid chain: Basement membrane-specific heparan sulfate proteoglycan core protein (4391 aa).

Residues Met1 to Ala21 form the signal peptide. The O-linked (GalNAc...) threonine glycan is linked to Thr42. O-linked (Xyl...) (heparan sulfate) serine glycosylation is found at Ser65, Ser71, and Ser76. The SEA domain maps to Gln80–Thr191. The N-linked (GlcNAc...) asparagine glycan is linked to Asn89. 4 LDL-receptor class A domains span residues Ala198 to Glu235, Pro284 to Gly320, Pro324 to Pro360, and Val367 to Met404. 12 disulfide bridges follow: Cys199–Cys212, Cys206–Cys225, Cys219–Cys234, Cys285–Cys297, Cys292–Cys310, Cys304–Cys319, Cys325–Cys337, Cys332–Cys350, Cys344–Cys359, Cys368–Cys381, Cys375–Cys394, and Cys388–Cys403. The Ig-like C2-type 1 domain maps to Pro405–Pro504. Residues Cys521–Cys530 enclose the Laminin EGF-like 1; first part domain. Residues Asp538 to Glu730 enclose the Laminin IV type A 1 domain. Asn554 carries an N-linked (GlcNAc...) asparagine glycan. Residues Cys731–Gly763 form the Laminin EGF-like 1; second part domain. 11 cysteine pairs are disulfide-bonded: Cys764/Cys773, Cys766/Cys780, Cys783/Cys792, Cys795/Cys811, Cys814/Cys829, Cys816/Cys839, Cys842/Cys851, Cys854/Cys869, Cys879/Cys892, Cys894/Cys903, and Cys906/Cys921. Laminin EGF-like domains lie at Cys764–Pro813 and Cys814–Pro871. The 45-residue stretch at Cys879–Lys923 folds into the Laminin EGF-like 4; truncated domain. The 10-residue stretch at Cys924–Cys933 folds into the Laminin EGF-like 5; first part domain. Residues Ala941–Gln1125 enclose the Laminin IV type A 2 domain. One can recognise a Laminin EGF-like 5; second part domain in the interval Cys1126–Arg1158. Intrachain disulfides connect Cys1159–Cys1168, Cys1161–Cys1175, Cys1178–Cys1187, Cys1190–Cys1206, Cys1209–Cys1224, Cys1211–Cys1234, Cys1237–Cys1246, Cys1249–Cys1263, Cys1275–Cys1287, Cys1277–Cys1293, Cys1295–Cys1304, and Cys1307–Cys1322. Laminin EGF-like domains lie at Cys1159–Leu1208, Cys1209–Arg1265, and Cys1275–Pro1324. Positions Cys1325–Cys1334 constitute a Laminin EGF-like 9; first part domain. Residues Ile1344 to Glu1529 enclose the Laminin IV type A 3 domain. One can recognise a Laminin EGF-like 9; second part domain in the interval Cys1530–Leu1562. Cystine bridges form between Cys1563/Cys1572, Cys1565/Cys1579, Cys1582/Cys1591, Cys1594/Cys1610, Cys1613/Cys1628, Cys1615/Cys1638, Cys1641/Cys1650, and Cys1653/Cys1668. Laminin EGF-like domains follow at residues Cys1563–Pro1612 and Cys1613–Pro1670. Ig-like C2-type domains lie at Leu1677–Ile1771, Thr1772–Ala1865, Pro1866–Gly1955, Pro1956–Pro2051, Pro2052–Thr2151, Arg2152–Ile2244, Pro2245–Thr2340, Gln2341–Thr2436, Pro2437–Ala2533, Tyr2534–Ser2629, Pro2630–Ser2726, Met2727–Ala2826, Pro2827–Ala2924, Gln2925–Ser3021, Pro3022–Pro3112, Thr3113–Ala3211, Pro3212–Pro3298, Pro3299–Thr3399, Pro3400–Ser3488, Val3489–Ala3574, and Leu3575–Val3662. An N-linked (GlcNAc...) asparagine glycan is attached at Asn1755. Asn2121 is a glycosylation site (N-linked (GlcNAc...) asparagine). A disordered region spans residues Ala2994–Gly3014. O-linked (Xyl...) (chondroitin sulfate) serine glycosylation is present at Ser2995. The segment covering Ala3003–Gly3014 has biased composition (polar residues). Asn3072 and Asn3105 each carry an N-linked (GlcNAc...) asparagine glycan. An N-linked (GlcNAc...) asparagine glycan is attached at Asn3279. The Laminin G-like 1 domain occupies Val3663 to Ser3843. Asn3780 and Asn3836 each carry an N-linked (GlcNAc...) asparagine glycan. 7 disulfides stabilise this stretch: Cys3819–Cys3845, Cys3848–Cys3859, Cys3853–Cys3869, Cys3871–Cys3880, Cys3888–Cys3899, Cys3893–Cys3910, and Cys3912–Cys3921. EGF-like domains are found at residues His3844–Glu3881 and Gln3884–Glu3922. Residues Thr3928–Tyr4103 enclose the Laminin G-like 2 domain. The O-linked (Xyl...) (chondroitin sulfate) serine glycan is linked to Ser3933. A glycan (N-linked (GlcNAc...) asparagine) is linked at Asn4068. 7 cysteine pairs are disulfide-bonded: Cys4076-Cys4102, Cys4108-Cys4119, Cys4113-Cys4129, Cys4131-Cys4140, Cys4147-Cys4159, Cys4153-Cys4164, and Cys4166-Cys4175. EGF-like domains lie at Asp4104–Glu4141 and Glu4143–Gln4176. A mediates motor neuron attachment region spans residues Leu4149–Glu4151. O-linked (Xyl...) (chondroitin sulfate) serine glycans are attached at residues Ser4179 and Ser4193. Residues Gln4201–Cys4389 enclose the Laminin G-like 3 domain. Ca(2+) is bound by residues Asp4258 and Leu4275. The tract at residues Leu4299–Glu4301 is mediates motor neuron attachment. Ala4325 and Asn4327 together coordinate Ca(2+). Residues Cys4355 and Cys4389 are joined by a disulfide bond. Positions Ala4364 to Ser4391 are disordered.

As to quaternary structure, has a strong tendency to aggregate in dimers or stellate structures. Interacts with other basement membrane components such as laminin, prolargin and collagen type IV. Interacts with COL13A1. Interacts with FGFBP1. Interacts with VWA1. Interacts (via C-terminus) with ECM1 (via C-terminus). Interacts with SVEP1. In terms of processing, proteolytic processing produces the C-terminal angiogenic peptide, endorepellin. This peptide can be further processed to produce the LG3 peptide. Post-translationally, O-glycosylated with core 1 or possibly core 8 glycans. Contains three heparan sulfate chains. Also contains chondroitin sulfate. In terms of tissue distribution, detected in cerebrospinal fluid, fibroblasts and urine (at protein level).

The protein resides in the secreted. Its subcellular location is the extracellular space. It is found in the extracellular matrix. The protein localises to the basement membrane. In terms of biological role, integral component of basement membranes. Component of the glomerular basement membrane (GBM), responsible for the fixed negative electrostatic membrane charge, and which provides a barrier which is both size- and charge-selective. It serves as an attachment substrate for cells. Plays essential roles in vascularization. Critical for normal heart development and for regulating the vascular response to injury. Also required for avascular cartilage development. Functionally, anti-angiogenic and anti-tumor peptide that inhibits endothelial cell migration, collagen-induced endothelial tube morphogenesis and blood vessel growth in the chorioallantoic membrane. Blocks endothelial cell adhesion to fibronectin and type I collagen. Anti-tumor agent in neovascularization. Interaction with its ligand, integrin alpha2/beta1, is required for the anti-angiogenic properties. Evokes a reduction in phosphorylation of receptor tyrosine kinases via alpha2/beta1 integrin-mediated activation of the tyrosine phosphatase, PTPN6. Its function is as follows. Has anti-angiogenic properties that require binding of calcium ions for full activity. In Homo sapiens (Human), this protein is Basement membrane-specific heparan sulfate proteoglycan core protein (HSPG2).